Here is a 150-residue protein sequence, read N- to C-terminus: D-aminoacyl-tRNA deacylase (150 aa).

The short motif at 138-139 is the Gly-cisPro motif, important for rejection of L-amino acids element; it reads GP.

It belongs to the DTD family. In terms of assembly, homodimer.

It localises to the cytoplasm. The enzyme catalyses glycyl-tRNA(Ala) + H2O = tRNA(Ala) + glycine + H(+). The catalysed reaction is a D-aminoacyl-tRNA + H2O = a tRNA + a D-alpha-amino acid + H(+). An aminoacyl-tRNA editing enzyme that deacylates mischarged D-aminoacyl-tRNAs. Also deacylates mischarged glycyl-tRNA(Ala), protecting cells against glycine mischarging by AlaRS. Acts via tRNA-based rather than protein-based catalysis; rejects L-amino acids rather than detecting D-amino acids in the active site. By recycling D-aminoacyl-tRNA to D-amino acids and free tRNA molecules, this enzyme counteracts the toxicity associated with the formation of D-aminoacyl-tRNA entities in vivo and helps enforce protein L-homochirality. This is D-aminoacyl-tRNA deacylase from Chromobacterium violaceum (strain ATCC 12472 / DSM 30191 / JCM 1249 / CCUG 213 / NBRC 12614 / NCIMB 9131 / NCTC 9757 / MK).